The following is a 94-amino-acid chain: MLKVNEYFDGNVKSIGFEQKGDKATVGVMEAGHYQFNTAAPERMTVVKGALTIQLADEDEWHTYEQGQSFDVAGHSSFKLEVKTPTAYLCEFLD.

This sequence belongs to the nucleoside phosphorylase PpnP family.

It carries out the reaction a purine D-ribonucleoside + phosphate = a purine nucleobase + alpha-D-ribose 1-phosphate. It catalyses the reaction adenosine + phosphate = alpha-D-ribose 1-phosphate + adenine. The enzyme catalyses cytidine + phosphate = cytosine + alpha-D-ribose 1-phosphate. The catalysed reaction is guanosine + phosphate = alpha-D-ribose 1-phosphate + guanine. It carries out the reaction inosine + phosphate = alpha-D-ribose 1-phosphate + hypoxanthine. It catalyses the reaction thymidine + phosphate = 2-deoxy-alpha-D-ribose 1-phosphate + thymine. The enzyme catalyses uridine + phosphate = alpha-D-ribose 1-phosphate + uracil. The catalysed reaction is xanthosine + phosphate = alpha-D-ribose 1-phosphate + xanthine. Catalyzes the phosphorolysis of diverse nucleosides, yielding D-ribose 1-phosphate and the respective free bases. Can use uridine, adenosine, guanosine, cytidine, thymidine, inosine and xanthosine as substrates. Also catalyzes the reverse reactions. This Aeromonas hydrophila subsp. hydrophila (strain ATCC 7966 / DSM 30187 / BCRC 13018 / CCUG 14551 / JCM 1027 / KCTC 2358 / NCIMB 9240 / NCTC 8049) protein is Pyrimidine/purine nucleoside phosphorylase.